We begin with the raw amino-acid sequence, 454 residues long: Glutamyl-tRNA(Gln) amidotransferase subunit A (454 aa).

Residues Lys56 and Ser131 each act as charge relay system in the active site. The active-site Acyl-ester intermediate is the Ser155.

This sequence belongs to the amidase family. GatA subfamily. Heterotrimer of A, B and C subunits.

The catalysed reaction is L-glutamyl-tRNA(Gln) + L-glutamine + ATP + H2O = L-glutaminyl-tRNA(Gln) + L-glutamate + ADP + phosphate + H(+). Functionally, allows the formation of correctly charged Gln-tRNA(Gln) through the transamidation of misacylated Glu-tRNA(Gln) in organisms which lack glutaminyl-tRNA synthetase. The reaction takes place in the presence of glutamine and ATP through an activated gamma-phospho-Glu-tRNA(Gln). In Campylobacter lari (strain RM2100 / D67 / ATCC BAA-1060), this protein is Glutamyl-tRNA(Gln) amidotransferase subunit A.